We begin with the raw amino-acid sequence, 193 residues long: Ion-translocating oxidoreductase complex subunit A (193 aa).

Transmembrane regions (helical) follow at residues 5–25, 39–59, 63–83, 102–122, 134–154, and 171–191; these read LLLFVGTILVNNFVLVKFLGL, MGMGLATTFVMTLASICAWLI, ILIPLNLIYLRTLAFILVIAV, LLGIFLPLITTNCAVLGVALL, ALYGFSAAVGFSLVMVLFTAI, and AIALITAGLMSLAFMGFSGLV.

Belongs to the NqrDE/RnfAE family. As to quaternary structure, the complex is composed of six subunits: RsxA, RsxB, RsxC, RsxD, RsxE and RsxG.

Its subcellular location is the cell inner membrane. Functionally, part of a membrane-bound complex that couples electron transfer with translocation of ions across the membrane. Required to maintain the reduced state of SoxR. The chain is Ion-translocating oxidoreductase complex subunit A from Shigella boydii serotype 4 (strain Sb227).